A 144-amino-acid chain; its full sequence is Large ribosomal subunit protein uL13 (144 aa).

It belongs to the universal ribosomal protein uL13 family. In terms of assembly, part of the 50S ribosomal subunit.

In terms of biological role, this protein is one of the early assembly proteins of the 50S ribosomal subunit, although it is not seen to bind rRNA by itself. It is important during the early stages of 50S assembly. The protein is Large ribosomal subunit protein uL13 of Blochmanniella pennsylvanica (strain BPEN).